The sequence spans 330 residues: Dimethyladenosine transferase 1, mitochondrial (330 aa).

A mitochondrion-targeting transit peptide spans methionine 1–arginine 84. S-adenosyl-L-methionine-binding positions include glutamine 38–leucine 41, asparagine 39, leucine 41, glycine 67, glutamate 89, aspartate 118, and asparagine 140.

Belongs to the class I-like SAM-binding methyltransferase superfamily. rRNA adenine N(6)-methyltransferase family. KsgA subfamily.

The protein localises to the mitochondrion. Its function is as follows. Probable S-adenosyl-L-methionine-dependent methyltransferase which specifically dimethylates mitochondrial 12S rRNA at the conserved stem loop. In contrast to mtTFB2, it does not have a critical role in either transcription or regulation of the copy number of mitochondrial DNA. This chain is Dimethyladenosine transferase 1, mitochondrial (mtTFB1), found in Drosophila melanogaster (Fruit fly).